A 246-amino-acid chain; its full sequence is 1-(5-phosphoribosyl)-5-[(5-phosphoribosylamino)methylideneamino] imidazole-4-carboxamide isomerase (246 aa).

Asp8 acts as the Proton acceptor in catalysis. The active-site Proton donor is Asp129.

It belongs to the HisA/HisF family.

The protein resides in the cytoplasm. It catalyses the reaction 1-(5-phospho-beta-D-ribosyl)-5-[(5-phospho-beta-D-ribosylamino)methylideneamino]imidazole-4-carboxamide = 5-[(5-phospho-1-deoxy-D-ribulos-1-ylimino)methylamino]-1-(5-phospho-beta-D-ribosyl)imidazole-4-carboxamide. It functions in the pathway amino-acid biosynthesis; L-histidine biosynthesis; L-histidine from 5-phospho-alpha-D-ribose 1-diphosphate: step 4/9. The sequence is that of 1-(5-phosphoribosyl)-5-[(5-phosphoribosylamino)methylideneamino] imidazole-4-carboxamide isomerase from Methylocella silvestris (strain DSM 15510 / CIP 108128 / LMG 27833 / NCIMB 13906 / BL2).